The chain runs to 690 residues: uncharacterized protein (690 aa).

The disordered stretch occupies residues Asp-553–Lys-601. Over residues Asn-560 to Lys-601 the composition is skewed to basic and acidic residues.

This sequence belongs to the glycosyltransferase 2 family.

This is an uncharacterized protein from Rickettsia bellii (strain RML369-C).